A 68-amino-acid chain; its full sequence is Large ribosomal subunit protein uL29 (68 aa).

It belongs to the universal ribosomal protein uL29 family.

This is Large ribosomal subunit protein uL29 from Wigglesworthia glossinidia brevipalpis.